Here is a 477-residue protein sequence, read N- to C-terminus: Secreted RxLR effector protein 102 (477 aa).

The N-terminal stretch at M1–A20 is a signal peptide. Residues R48–R65 carry the RxLR-dEER motif. Disordered regions lie at residues S326 to G345, I351 to I370, S376 to R401, and P433 to S455.

Belongs to the RxLR effector family.

It is found in the secreted. It localises to the host nucleus. Its function is as follows. Secreted effector that acts as an elicitor that induces cell death in host plant cells. The chain is Secreted RxLR effector protein 102 from Plasmopara viticola (Downy mildew of grapevine).